Consider the following 430-residue polypeptide: Pre-B-cell leukemia transcription factor 1 (430 aa).

The tract at residues 1–40 is disordered; the sequence is MDEQPRLMHSHAGVGMAGHPGLSQHLQDGAGGTEGEGGRK. The PBC domain maps to 38 to 232; it reads GRKQDIGDIL…VMILRSRFLD (195 aa). The PBC-A stretch occupies residues 45-124; the sequence is DILQQIMTIT…EGVAGPEKGG (80 aa). Positions 127–232 are PBC-B; it reads AAAAAAAAAS…VMILRSRFLD (106 aa). Positions 233-295 form a DNA-binding region, homeobox; TALE-type; it reads ARRKRRNFNK…NKRIRYKKNI (63 aa). Disordered regions lie at residues 317 to 338 and 395 to 430; these read SAHG…SSSF and SPQG…DTSN. A compositionally biased stretch (low complexity) spans 323-338; sequence ANSPSTPNSAGSSSSF. Residues 407-418 show a composition bias toward polar residues; the sequence is DATTPSSVTSPT.

Belongs to the TALE/PBX homeobox family. As to quaternary structure, forms a heterodimer with MEIS1 which binds DNA. The PBX1-MEIS1 heterodimer binds a cAMP-responsive sequence in CYP17. It also binds a consensus region in the SOX3 promoter. PBX1 forms heterotrimers with MEIS1 and a number of HOX proteins including HOXA9, HOXD4, HOXD9 and HOXD10. Forms heterodimers with HOXA1, HOXA5, HOXB7 and HOXB8 which bind the 5'-TGATTGAT-3' consensus sequence. Also forms heterodimers with HOXA5, HOXB7, HOXB8, HOXC8 and HOXD4 which bind the 5'-ATCAATCAA-3' consensus sequence. Interacts with PBXIP1. Interacts with TLX1. Interacts with FOXC1. Interacts with MN1. In terms of assembly, interacts with MEIS2 isoform 4, SP1, SP3 and KLF4. Part of a PDX1:PBX1b:MEIS2B complex; PBX1b recruits MEIS2B to the complex. In terms of tissue distribution, expressed in the kidney. Expressed in the endothelial cells of the glomeruli and interstitium (at protein level). Expressed in all tissues except in cells of the B and T lineage. Expressed strongly in kidney and brain.

The protein localises to the nucleus. Its function is as follows. Transcription factor which binds the DNA sequence 5'-TGATTGAT-3' as part of a heterodimer with HOX proteins such as HOXA1, HOXA5, HOXB7 and HOXB8. Binds to the DNA sequence 5'-TGATTGAC-3' in complex with a nuclear factor which is not a class I HOX protein. Has also been shown to bind the DNA sequence 5'-ATCAATCAA-3' cooperatively with HOXA5, HOXB7, HOXB8, HOXC8 and HOXD4. Acts as a transcriptional activator of PF4 in complex with MEIS1. Also activates transcription of SOX3 in complex with MEIS1 by binding to the 5'-TGATTGAC-3' consensus sequence. In natural killer cells, binds to the NFIL3 promoter and acts as a transcriptional activator of NFIL3, promoting natural killer cell development. Plays a role in the cAMP-dependent regulation of CYP17A1 gene expression via its cAMP-regulatory sequence (CRS1). Probably in complex with MEIS2, involved in transcriptional regulation by KLF4. Acts as a transcriptional activator of NKX2-5 and a transcriptional repressor of CDKN2B. Together with NKX2-5, required for spleen development through a mechanism that involves CDKN2B repression. As part of a PDX1:PBX1b:MEIS2B complex in pancreatic acinar cells, is involved in the transcriptional activation of the ELA1 enhancer; the complex binds to the enhancer B element and cooperates with the transcription factor 1 complex (PTF1) bound to the enhancer A element. The sequence is that of Pre-B-cell leukemia transcription factor 1 (PBX1) from Homo sapiens (Human).